The chain runs to 649 residues: PH and SEC7 domain-containing protein 1 (649 aa).

Disordered stretches follow at residues 1–22 (MPHS…PSAD) and 57–161 (PGPT…LDST). The segment covering 70–88 (PPQPPAPRPDPPAPAPLAP) has biased composition (pro residues). A compositionally biased stretch (basic and acidic residues) spans 120-132 (PRKELPSPSHSED). Residues 137–331 (GAAPLGSEPP…KALYSSIKNE (195 aa)) form the SEC7 domain. A Phosphoserine modification is found at Ser345. A PH domain is found at 381 to 494 (AVYKHGALVR…WITRINVVAA (114 aa)). 2 coiled-coil regions span residues 523 to 549 (LSQE…HRAA) and 581 to 608 (AALL…AGST). The disordered stretch occupies residues 601–649 (ALAQAGSTEEGCPPPHSSPSLQPNPTSQPRAQRPGSEARAGAGSTRPKP). Polar residues predominate over residues 618 to 630 (SPSLQPNPTSQPR).

It belongs to the PSD family. As to quaternary structure, interacts with ACTN1. Interacts (ARF6-bound form) with KCNK1; does not interact with KCNK1 in the absence of ARF6. In terms of tissue distribution, brain. Expressed in the hippocampal and dentate neuronal layers, cerebellar cortex, molecular layer of the hippocampus and dentate gyrus.

It is found in the cell membrane. The protein resides in the cell projection. Its subcellular location is the ruffle membrane. The protein localises to the cleavage furrow. Functionally, guanine nucleotide exchange factor for ARF6. Induces cytoskeletal remodeling. The polypeptide is PH and SEC7 domain-containing protein 1 (Psd) (Rattus norvegicus (Rat)).